A 122-amino-acid polypeptide reads, in one-letter code: Large ribosomal subunit protein uL14 (122 aa).

It belongs to the universal ribosomal protein uL14 family. Part of the 50S ribosomal subunit. Forms a cluster with proteins L3 and L19. In the 70S ribosome, L14 and L19 interact and together make contacts with the 16S rRNA in bridges B5 and B8.

Functionally, binds to 23S rRNA. Forms part of two intersubunit bridges in the 70S ribosome. This Rickettsia africae (strain ESF-5) protein is Large ribosomal subunit protein uL14.